The chain runs to 527 residues: Probable bifunctional methylthioribulose-1-phosphate dehydratase/enolase-phosphatase E1 (527 aa).

The segment at M1–D244 is methylthioribulose-1-phosphate dehydratase. Substrate is bound at residue C116. Residues H134 and H136 each coordinate Zn(2+). E159 acts as the Proton donor/acceptor; for methylthioribulose-1-phosphate dehydratase activity in catalysis. H209 serves as a coordination point for Zn(2+). Residues I288 to I527 form an enolase-phosphatase E1 region. Mg(2+) contacts are provided by D291 and E293. Substrate-binding positions include S426–S427 and K460. D486 serves as a coordination point for Mg(2+).

In the N-terminal section; belongs to the aldolase class II family. MtnB subfamily. The protein in the C-terminal section; belongs to the HAD-like hydrolase superfamily. MasA/MtnC family. Requires Zn(2+) as cofactor. It depends on Mg(2+) as a cofactor.

It carries out the reaction 5-(methylsulfanyl)-D-ribulose 1-phosphate = 5-methylsulfanyl-2,3-dioxopentyl phosphate + H2O. It catalyses the reaction 5-methylsulfanyl-2,3-dioxopentyl phosphate + H2O = 1,2-dihydroxy-5-(methylsulfanyl)pent-1-en-3-one + phosphate. The protein operates within amino-acid biosynthesis; L-methionine biosynthesis via salvage pathway; L-methionine from S-methyl-5-thio-alpha-D-ribose 1-phosphate: step 2/6. It functions in the pathway amino-acid biosynthesis; L-methionine biosynthesis via salvage pathway; L-methionine from S-methyl-5-thio-alpha-D-ribose 1-phosphate: step 3/6. It participates in amino-acid biosynthesis; L-methionine biosynthesis via salvage pathway; L-methionine from S-methyl-5-thio-alpha-D-ribose 1-phosphate: step 4/6. This chain is Probable bifunctional methylthioribulose-1-phosphate dehydratase/enolase-phosphatase E1, found in Ricinus communis (Castor bean).